The following is a 334-amino-acid chain: Cytoskeleton protein RodZ (334 aa).

At 1–111 (MNTEATHDQN…LGKRRKKRDG (111 aa)) the chain is on the cytoplasmic side. Residues 19-71 (LRNAREQLGLSQQAVAERLCLKVSTVRDIEEDKAPSDLASTFLRGYIRSYARL) enclose the HTH cro/C1-type domain. The segment at residues 30–49 (QQAVAERLCLKVSTVRDIEE) is a DNA-binding region (H-T-H motif). A helical; Signal-anchor for type II membrane protein membrane pass occupies residues 112 to 132 (WLMSFTWLVLFVVVGLTGAWW). The Periplasmic segment spans residues 133–334 (WQNHKAQQEE…TLNAEPTPAQ (202 aa)). 2 disordered regions span residues 155 to 207 (NADK…ATQN) and 221 to 241 (ATSA…SQAG). Over residues 176–207 (TTPAQTAPAPATPVDSTAATQTPAATATATQN) the composition is skewed to low complexity.

It belongs to the RodZ family.

It is found in the cell inner membrane. Cytoskeletal protein that is involved in cell-shape control through regulation of the length of the long axis. This is Cytoskeleton protein RodZ from Salmonella schwarzengrund (strain CVM19633).